The chain runs to 344 residues: Acireductone dioxygenase (344 aa).

Residues histidine 92, histidine 94, glutamate 98, and histidine 137 each coordinate Fe(2+). Residues histidine 92, histidine 94, glutamate 98, and histidine 137 each contribute to the Ni(2+) site.

Belongs to the acireductone dioxygenase (ARD) family. Fe(2+) is required as a cofactor. It depends on Ni(2+) as a cofactor.

The protein resides in the cytoplasm. The protein localises to the nucleus. It carries out the reaction 1,2-dihydroxy-5-(methylsulfanyl)pent-1-en-3-one + O2 = 4-methylsulfanyl-2-oxobutanoate + formate + 2 H(+). The enzyme catalyses 1,2-dihydroxy-5-(methylsulfanyl)pent-1-en-3-one + O2 = 3-(methylsulfanyl)propanoate + CO + formate + 2 H(+). It participates in amino-acid biosynthesis; L-methionine biosynthesis via salvage pathway; L-methionine from S-methyl-5-thio-alpha-D-ribose 1-phosphate: step 5/6. Catalyzes 2 different reactions between oxygen and the acireductone 1,2-dihydroxy-3-keto-5-methylthiopentene (DHK-MTPene) depending upon the metal bound in the active site. Fe-containing acireductone dioxygenase (Fe-ARD) produces formate and 2-keto-4-methylthiobutyrate (KMTB), the alpha-ketoacid precursor of methionine in the methionine recycle pathway. Ni-containing acireductone dioxygenase (Ni-ARD) produces methylthiopropionate, carbon monoxide and formate, and does not lie on the methionine recycle pathway. The protein is Acireductone dioxygenase of Leishmania major.